A 525-amino-acid chain; its full sequence is C6 finger transcription factor fsqA (525 aa).

Residues 12–53 (CDRCRGQKLRCVGAGKPIPNSSSRLLRNEIPCDRCRRAKVEC) constitute a DNA-binding region (zn(2)-C6 fungal-type). Disordered stretches follow at residues 80–142 (RSSS…LGDM), 204–260 (EWNS…EPAG), and 327–371 (RARS…ARSS). The segment covering 95–115 (PPNSLVTAASKPHPNSLSFNH) has biased composition (polar residues). Residues 327–337 (RARSQWSSLPE) are compositionally biased toward polar residues.

It is found in the nucleus. In terms of biological role, transcription factor that regulates the expression of the gene cluster that mediates the biosynthesis of the isoquinoline alkaloids fumisoquin A, fumisoquin B and fumisoquin C; as well as small amounts of fumipyrrole as a shunt metabolite. The products of the cluster lead to a brown coloration and are important for growth and conidiation. The polypeptide is C6 finger transcription factor fsqA (Aspergillus fumigatus (strain ATCC MYA-4609 / CBS 101355 / FGSC A1100 / Af293) (Neosartorya fumigata)).